We begin with the raw amino-acid sequence, 311 residues long: Methionyl-tRNA formyltransferase (311 aa).

Residue 110–113 (SLLP) coordinates (6S)-5,6,7,8-tetrahydrofolate.

The protein belongs to the Fmt family.

It carries out the reaction L-methionyl-tRNA(fMet) + (6R)-10-formyltetrahydrofolate = N-formyl-L-methionyl-tRNA(fMet) + (6S)-5,6,7,8-tetrahydrofolate + H(+). In terms of biological role, attaches a formyl group to the free amino group of methionyl-tRNA(fMet). The formyl group appears to play a dual role in the initiator identity of N-formylmethionyl-tRNA by promoting its recognition by IF2 and preventing the misappropriation of this tRNA by the elongation apparatus. This chain is Methionyl-tRNA formyltransferase, found in Streptococcus pneumoniae serotype 2 (strain D39 / NCTC 7466).